The primary structure comprises 187 residues: tRNA (cytidine(56)-2'-O)-methyltransferase (187 aa).

S-adenosyl-L-methionine contacts are provided by residues Leu-94 and Gly-120 to Val-124.

Belongs to the aTrm56 family. In terms of assembly, homodimer.

Its subcellular location is the cytoplasm. It catalyses the reaction cytidine(56) in tRNA + S-adenosyl-L-methionine = 2'-O-methylcytidine(56) in tRNA + S-adenosyl-L-homocysteine + H(+). Its function is as follows. Specifically catalyzes the AdoMet-dependent 2'-O-ribose methylation of cytidine at position 56 in tRNAs. This Hyperthermus butylicus (strain DSM 5456 / JCM 9403 / PLM1-5) protein is tRNA (cytidine(56)-2'-O)-methyltransferase.